The chain runs to 124 residues: Small ribosomal subunit protein uS12 (124 aa).

Residues 1-32 (MPTIQQLVRKGRQDKVSKNKTPALKGSPQRRG) form a disordered region. A 3-methylthioaspartic acid modification is found at D89.

It belongs to the universal ribosomal protein uS12 family. As to quaternary structure, part of the 30S ribosomal subunit. Contacts proteins S8 and S17. May interact with IF1 in the 30S initiation complex.

With S4 and S5 plays an important role in translational accuracy. Functionally, interacts with and stabilizes bases of the 16S rRNA that are involved in tRNA selection in the A site and with the mRNA backbone. Located at the interface of the 30S and 50S subunits, it traverses the body of the 30S subunit contacting proteins on the other side and probably holding the rRNA structure together. The combined cluster of proteins S8, S12 and S17 appears to hold together the shoulder and platform of the 30S subunit. This chain is Small ribosomal subunit protein uS12, found in Nocardioides sp. (strain ATCC BAA-499 / JS614).